The chain runs to 568 residues: Periplasmic trehalase (568 aa).

Residues 1–39 form the signal peptide; it reads MPHVVARSGDVMSSAAPPSCTSLLGLSLSMFVAPCTLTA. Residues R169, 176–177, N213, 222–224, 294–296, and G327 contribute to the substrate site; these read WD, RSQ, and RPE. Catalysis depends on proton donor/acceptor residues D329 and E511. E526 is a binding site for substrate.

This sequence belongs to the glycosyl hydrolase 37 family.

The protein resides in the periplasm. It catalyses the reaction alpha,alpha-trehalose + H2O = alpha-D-glucose + beta-D-glucose. Its function is as follows. Provides the cells with the ability to utilize trehalose at high osmolarity by splitting it into glucose molecules that can subsequently be taken up by the phosphotransferase-mediated uptake system. This is Periplasmic trehalase from Xanthomonas oryzae pv. oryzae (strain MAFF 311018).